The following is a 300-amino-acid chain: E3 ubiquitin-protein ligase RNF212B (300 aa).

Residues 6–40 form an RING-type zinc finger; sequence CNQCFRKDGAHFFVTSCGHIFCKKCVTLEKCAVCG. Residues 88–124 are a coiled coil; that stretch reads LIAFYKHRITKLETAMQETQQALVSQDKELSVLRKEN. 2 disordered regions span residues 141–251 and 280–300; these read YQGS…HTRV and PYQQQRQMGLPSGREAWTTSR. The span at 155–169 shows a compositional bias: polar residues; that stretch reads TSPSQSVTPRPSFQH. Residues 170–183 are compositionally biased toward low complexity; that stretch reads SSQVVSRSSSVESV. Residues 191–200 are compositionally biased toward gly residues; it reads GSLGQGGRGL. A compositionally biased stretch (polar residues) spans 211–234; it reads NETPSPASTHSLSYRPSSASSGQG.

As to quaternary structure, homodimer. In terms of processing, autoubiquitinated.

The protein localises to the chromosome. The enzyme catalyses S-ubiquitinyl-[E2 ubiquitin-conjugating enzyme]-L-cysteine + [acceptor protein]-L-lysine = [E2 ubiquitin-conjugating enzyme]-L-cysteine + N(6)-ubiquitinyl-[acceptor protein]-L-lysine.. Its pathway is protein modification; protein ubiquitination. In terms of biological role, ubiquitin E3 ligase that acts as a crucial factor for crossing-over (CO) formation during meiosis. Essential for normal prophase I progression and for ensuring appropriate CO designation in meiosis. Recruits key components of the cross-over machinery either directly ou indirectly, leading to the activation of the MutL-gamma complex. The function of RNF212B in CO designation is dependent on its catalytic activity. The chain is E3 ubiquitin-protein ligase RNF212B (RNF212B) from Pongo abelii (Sumatran orangutan).